Reading from the N-terminus, the 380-residue chain is uncharacterized protein (380 aa).

Disordered stretches follow at residues 278-323 and 345-368; these read AATI…PRVA and SLPG…RPRR. The span at 301–319 shows a compositional bias: basic residues; sequence RNGPRRPARRGTSRGRRCA.

This is an uncharacterized protein from Mycobacterium tuberculosis (strain CDC 1551 / Oshkosh).